A 298-amino-acid chain; its full sequence is 4-diphosphocytidyl-2-C-methyl-D-erythritol kinase (298 aa).

Lysine 15 is a catalytic residue. ATP is bound at residue 102 to 112; the sequence is PVAAGIGGGSS. Aspartate 142 is a catalytic residue.

It belongs to the GHMP kinase family. IspE subfamily.

It carries out the reaction 4-CDP-2-C-methyl-D-erythritol + ATP = 4-CDP-2-C-methyl-D-erythritol 2-phosphate + ADP + H(+). It participates in isoprenoid biosynthesis; isopentenyl diphosphate biosynthesis via DXP pathway; isopentenyl diphosphate from 1-deoxy-D-xylulose 5-phosphate: step 3/6. Catalyzes the phosphorylation of the position 2 hydroxy group of 4-diphosphocytidyl-2C-methyl-D-erythritol. The chain is 4-diphosphocytidyl-2-C-methyl-D-erythritol kinase from Hyphomonas neptunium (strain ATCC 15444).